We begin with the raw amino-acid sequence, 473 residues long: O-methyltransferase ARMGADRAFT_1088206 (473 aa).

Residues 276 to 277 (AG), D299, 330 to 331 (DM), and R348 contribute to the S-adenosyl-L-methionine site. H352 serves as the catalytic Proton acceptor.

The protein belongs to the class I-like SAM-binding methyltransferase superfamily. Cation-independent O-methyltransferase family.

It participates in secondary metabolite biosynthesis. O-methyltransferase, part of the gene cluster that mediates the biosynthesis of melleolides, a range of antifungal and phytotoxic polyketide derivatives composed of an orsellinic acid (OA) moiety esterified to various sesquiterpene alcohols. The first step in melleolides biosynthesis is performed by the delta(6)-protoilludene synthase PRO1 which catalyzes the cyclization of farnesyl diphosphate to protoilludene. The orsellinic acid synthase armB produces OA by condensing acetyl-CoA with 3 malonyl-CoA units in a three-round chain elongation reaction folowed by a C2-C7 ring closure. ArmB further catalyzes the trans-esterification of OA to the various sesquiterpene alcohols resulting from the hydroxylation of protoilludene. The melleolides cluster also includes 5 cytochrome P450 monooxygenases, 4 NAD(+)-dependent oxidoreductases, one flavin-dependent oxidoreductase, and one O-methyltransferase. The cytochrome P450 monooxygenases may be involved in protoilludene hydroxylation to elaborate melleolides with multiple alcohol groups, such as melleolide D, which carries alcohol functionalities at C-4, C-5, C-10, and C-13. The role of the NAD(+)-dependent enzymes remains unknown. Numerous melleolides, including arnamial, show 5'-O-methylation of the aromatic moiety which may be catalyzed by the methyltransferase encoded in the cluster. The flavin-dependent oxidoreductase might represent the dehydrogenase yielding the aldehyde in position 1 of arnamial and other melleolides. Finally, several halogenase localized outside of the cluster, are able to catalyze the transfer of a single chlorine atom to the melleolide backbone, resulting in a 6'-chloromelleolide product. In Armillaria gallica (Bulbous honey fungus), this protein is O-methyltransferase ARMGADRAFT_1088206.